The following is a 596-amino-acid chain: Malto-oligosyltrehalose trehalohydrolase (596 aa).

Residue 263-268 (RLDAVH) coordinates substrate. D265 acts as the Nucleophile in catalysis. Catalysis depends on E302, which acts as the Proton donor. Residues 327 to 331 (DDFHH) and 397 to 402 (HDQIGN) each bind substrate.

This sequence belongs to the glycosyl hydrolase 13 family.

The protein resides in the cytoplasm. It catalyses the reaction hydrolysis of (1-&gt;4)-alpha-D-glucosidic linkage in 4-alpha-D-[(1-&gt;4)-alpha-D-glucanosyl]n trehalose to yield trehalose and (1-&gt;4)-alpha-D-glucan.. The protein operates within glycan biosynthesis; trehalose biosynthesis. The protein is Malto-oligosyltrehalose trehalohydrolase (treZ) of Rhizobium sp. (strain M-11).